Here is a 276-residue protein sequence, read N- to C-terminus: O-methyltransferase cnsE (276 aa).

S-adenosyl-L-methionine is bound by residues glutamine 110, 133–134, and histidine 155; that span reads DA.

The protein belongs to the methyltransferase superfamily. It depends on S-adenosyl-L-methionine as a cofactor.

Its pathway is alkaloid biosynthesis. Functionally, O-methyltransferase; part of the gene cluster that mediates the biosynthesis of communesins, a prominent class of indole alkaloids with great potential as pharmaceuticals. Communesins are biosynthesized by the coupling of tryptamine and aurantioclavine, two building blocks derived from L-tryptophan. The L-tryptophan decarboxylase cnsB converts L-tryptophan to tryptamine, whereas the tryptophan dimethylallyltransferase cnsF converts L-tryptophan to 4-dimethylallyl tryptophan which is further transformed to aurantioclavine by the aurantioclavine synthase cnsA, probably aided by the catalase cnsD. The cytochrome P450 monooxygenase cnsC catalyzes the heterodimeric coupling between the two different indole moieties, tryptamine and aurantioclavine, to construct vicinal quaternary stereocenters and yield the heptacyclic communesin scaffold. The O-methyltransferase cnsE then methylates the communesin scaffold to produce communesin K, the simplest characterized communesin that contains the heptacyclic core. The dioxygenase cnsJ converts communesin K into communesin I. Acylation to introduce the hexadienyl group at position N16 of communesin I by the acyltransferase cnsK leads to the production of communesin B. The hexadienyl group is produced by the highly reducing polyketide synthase cnsI, before being hydrolytically removed from cnsI by the serine hydrolase cnsH, converted into hexadienyl-CoA by the CoA ligase cnsG, and then transferred to communesin I by cnsK. Surprisingly, cnsK may also be a promiscuous acyltransferase that can tolerate a range of acyl groups, including acetyl-, propionyl-, and butyryl-CoA, which lead to communesins A, G and H respectively. The roles of the alpha-ketoglutarate-dependent dioxygenases cnsM and cnsP have still to be determined. In Penicillium expansum (Blue mold rot fungus), this protein is O-methyltransferase cnsE.